Here is a 293-residue protein sequence, read N- to C-terminus: Acetyl-coenzyme A carboxylase carboxyl transferase subunit beta (293 aa).

The CoA carboxyltransferase N-terminal domain maps to 29–293 (LWVKCSECSQ…GVNELVEANI (265 aa)). Cysteine 33, cysteine 36, cysteine 52, and cysteine 55 together coordinate Zn(2+). The C4-type zinc-finger motif lies at 33-55 (CSECSQVAYRKDLISNFNVCSNC).

Belongs to the AccD/PCCB family. In terms of assembly, acetyl-CoA carboxylase is a heterohexamer composed of biotin carboxyl carrier protein (AccB), biotin carboxylase (AccC) and two subunits each of ACCase subunit alpha (AccA) and ACCase subunit beta (AccD). Zn(2+) serves as cofactor.

It localises to the cytoplasm. It catalyses the reaction N(6)-carboxybiotinyl-L-lysyl-[protein] + acetyl-CoA = N(6)-biotinyl-L-lysyl-[protein] + malonyl-CoA. The protein operates within lipid metabolism; malonyl-CoA biosynthesis; malonyl-CoA from acetyl-CoA: step 1/1. Component of the acetyl coenzyme A carboxylase (ACC) complex. Biotin carboxylase (BC) catalyzes the carboxylation of biotin on its carrier protein (BCCP) and then the CO(2) group is transferred by the transcarboxylase to acetyl-CoA to form malonyl-CoA. The polypeptide is Acetyl-coenzyme A carboxylase carboxyl transferase subunit beta (Prochlorococcus marinus (strain MIT 9215)).